A 158-amino-acid chain; its full sequence is Transcription elongation factor GreA (158 aa).

Residues 47–74 (AEYHAAKEEQSHNEGRIAELEDKLARAD) are a coiled coil.

It belongs to the GreA/GreB family.

Functionally, necessary for efficient RNA polymerase transcription elongation past template-encoded arresting sites. The arresting sites in DNA have the property of trapping a certain fraction of elongating RNA polymerases that pass through, resulting in locked ternary complexes. Cleavage of the nascent transcript by cleavage factors such as GreA or GreB allows the resumption of elongation from the new 3'terminus. GreA releases sequences of 2 to 3 nucleotides. This chain is Transcription elongation factor GreA, found in Nitrobacter winogradskyi (strain ATCC 25391 / DSM 10237 / CIP 104748 / NCIMB 11846 / Nb-255).